Here is a 266-residue protein sequence, read N- to C-terminus: Very-long-chain aldehyde decarbonylase GL1-11 (266 aa).

The next 4 membrane-spanning stretches (helical) occupy residues 25-45 (VVTF…SLLF), 74-94 (ILYH…AFKF), 106-126 (WTVI…IFYW), and 163-183 (ILFL…HLFT). Positions 113–248 (VLFYFVLEDF…FVYMDWLFGT (136 aa)) constitute a Fatty acid hydroxylase domain.

It belongs to the sterol desaturase family. In terms of assembly, homodimer.

It localises to the endoplasmic reticulum membrane. The catalysed reaction is a long-chain fatty aldehyde + 2 NADPH + O2 + H(+) = a long-chain alkane + formate + 2 NADP(+) + H2O. Functionally, aldehyde decarbonylase involved in the conversion of aldehydes to alkanes. Core component of a very-long-chain alkane synthesis complex. The chain is Very-long-chain aldehyde decarbonylase GL1-11 from Oryza sativa subsp. indica (Rice).